The following is a 234-amino-acid chain: Carboxy-S-adenosyl-L-methionine synthase (234 aa).

S-adenosyl-L-methionine is bound by residues Tyr35, 60–62, 109–110, Asn124, and Arg191; these read GCS and DV.

This sequence belongs to the class I-like SAM-binding methyltransferase superfamily. Cx-SAM synthase family. As to quaternary structure, homodimer.

The catalysed reaction is prephenate + S-adenosyl-L-methionine = carboxy-S-adenosyl-L-methionine + 3-phenylpyruvate + H2O. Functionally, catalyzes the conversion of S-adenosyl-L-methionine (SAM) to carboxy-S-adenosyl-L-methionine (Cx-SAM). In Campylobacter curvus (strain 525.92), this protein is Carboxy-S-adenosyl-L-methionine synthase.